A 406-amino-acid chain; its full sequence is 2-epi-valiolone synthase (406 aa).

The segment at M1–S21 is disordered. NAD(+) contacts are provided by residues E105 to K108, G137 to D141, T161 to S162, K174, K183, and C201 to T204. Zn(2+)-binding residues include E216, H287, and H304.

The protein belongs to the sugar phosphate cyclases superfamily. EVS family. NAD(+) is required as a cofactor. Requires Co(2+) as cofactor. It depends on Zn(2+) as a cofactor.

It carries out the reaction D-sedoheptulose 7-phosphate = 2-epi-valiolone + phosphate. Functionally, catalyzes the conversion of sedoheptulose 7-phosphate to 2-epi-valiolone, which may serve as an alternative precursor for aminocyclitol biosynthesis. This is 2-epi-valiolone synthase from Stigmatella aurantiaca (strain DW4/3-1).